An 89-amino-acid polypeptide reads, in one-letter code: Small ribosomal subunit protein uS15 (89 aa).

It belongs to the universal ribosomal protein uS15 family. In terms of assembly, part of the 30S ribosomal subunit. Forms a bridge to the 50S subunit in the 70S ribosome, contacting the 23S rRNA.

In terms of biological role, one of the primary rRNA binding proteins, it binds directly to 16S rRNA where it helps nucleate assembly of the platform of the 30S subunit by binding and bridging several RNA helices of the 16S rRNA. Forms an intersubunit bridge (bridge B4) with the 23S rRNA of the 50S subunit in the ribosome. This is Small ribosomal subunit protein uS15 from Levilactobacillus brevis (strain ATCC 367 / BCRC 12310 / CIP 105137 / JCM 1170 / LMG 11437 / NCIMB 947 / NCTC 947) (Lactobacillus brevis).